The following is a 389-amino-acid chain: Chalcone synthase 3 (389 aa).

Residue Cys-164 is part of the active site.

This sequence belongs to the thiolase-like superfamily. Chalcone/stilbene synthases family.

The catalysed reaction is (E)-4-coumaroyl-CoA + 3 malonyl-CoA + 3 H(+) = 2',4,4',6'-tetrahydroxychalcone + 3 CO2 + 4 CoA. It functions in the pathway secondary metabolite biosynthesis; flavonoid biosynthesis. In terms of biological role, the primary product of this enzyme is 4,2',4',6'-tetrahydroxychalcone (also termed naringenin-chalcone or chalcone) which can under specific conditions spontaneously isomerize into naringenin. This Camellia sinensis (Tea plant) protein is Chalcone synthase 3 (CHS3).